Reading from the N-terminus, the 121-residue chain is Basic phospholipase A2 BmTX-I (121 aa).

Intrachain disulfides connect Cys-26/Cys-114, Cys-28/Cys-45, Cys-44/Cys-95, Cys-50/Cys-121, Cys-51/Cys-88, Cys-58/Cys-82, and Cys-76/Cys-86. Ca(2+)-binding residues include Tyr-27, Gly-29, and Gly-31. The active site involves His-48. Asp-49 provides a ligand contact to Ca(2+). Residue Asp-89 is part of the active site.

It depends on Ca(2+) as a cofactor. As to expression, expressed by the venom gland.

The protein localises to the secreted. It carries out the reaction a 1,2-diacyl-sn-glycero-3-phosphocholine + H2O = a 1-acyl-sn-glycero-3-phosphocholine + a fatty acid + H(+). Its activity is regulated as follows. Inhibited by magnesium, cadmium and manganese ions. Also inhibited by crotapotin. In terms of biological role, snake venom phospholipase A2 (PLA2) that shows enzymatic activity in the presence of a synthetic substrate. In vitro, blocks the neuromuscular transmission in young chick biventer cervicis preparations. In mice, induces myonecrosis and a systemic interleukin-6 response upon intramuscular injection. Also induces edema and exerts a strong pro-inflammatory effect. PLA2 catalyzes the calcium-dependent hydrolysis of the 2-acyl groups in 3-sn-phosphoglycerides. This chain is Basic phospholipase A2 BmTX-I, found in Bothrops moojeni (Lance-headed viper).